The following is a 395-amino-acid chain: Acetate kinase (395 aa).

Asparagine 8 contributes to the Mg(2+) binding site. Lysine 15 lines the ATP pocket. A substrate-binding site is contributed by arginine 89. The active-site Proton donor/acceptor is aspartate 146. ATP contacts are provided by residues 206 to 210, 281 to 283, and 329 to 333; these read HLGNG, DLR, and GIGEN. Glutamate 382 serves as a coordination point for Mg(2+).

Belongs to the acetokinase family. Homodimer. Mg(2+) serves as cofactor. The cofactor is Mn(2+).

It is found in the cytoplasm. The catalysed reaction is acetate + ATP = acetyl phosphate + ADP. It functions in the pathway metabolic intermediate biosynthesis; acetyl-CoA biosynthesis; acetyl-CoA from acetate: step 1/2. Induced by glucose excess, the induction may be mediated by CcpA transcriptional regulator. Catalyzes the formation of acetyl phosphate from acetate and ATP. Can also catalyze the reverse reaction. Appears to favor the formation of acetate. Involved in the secretion of excess carbohydrate. The sequence is that of Acetate kinase from Bacillus subtilis (strain 168).